A 378-amino-acid polypeptide reads, in one-letter code: 3-dehydroquinate synthase (378 aa).

NAD(+) is bound by residues 111–115 (GVIGD), 135–136 (TS), lysine 148, and lysine 157. Zn(2+) contacts are provided by glutamate 190, histidine 252, and histidine 271.

The protein belongs to the sugar phosphate cyclases superfamily. Dehydroquinate synthase family. The cofactor is NAD(+). Co(2+) is required as a cofactor. Requires Zn(2+) as cofactor.

Its subcellular location is the cytoplasm. It catalyses the reaction 7-phospho-2-dehydro-3-deoxy-D-arabino-heptonate = 3-dehydroquinate + phosphate. It participates in metabolic intermediate biosynthesis; chorismate biosynthesis; chorismate from D-erythrose 4-phosphate and phosphoenolpyruvate: step 2/7. Functionally, catalyzes the conversion of 3-deoxy-D-arabino-heptulosonate 7-phosphate (DAHP) to dehydroquinate (DHQ). The polypeptide is 3-dehydroquinate synthase (Mesorhizobium japonicum (strain LMG 29417 / CECT 9101 / MAFF 303099) (Mesorhizobium loti (strain MAFF 303099))).